The following is a 332-amino-acid chain: MSDFAFFALEALIKCIIIIAIFASLAGLATYAERKVLAYFQRRIGPDMVGPFGLIQLVADMIKLFTKEDIIPSNSQKFIFAIAPLISAICAFVSLAAIPMLPEFTLFGRVIQPIVADINVALLFVIGTSGLCFYAVFLGGLASNNKWSILGAARGLVAIISYESVGALALIAIVMLVGSFSLVDINNYQSDGFFSWLIFKQPLAFVLFIIALFIETNRTPLCLTENDAEIVAGYGTEYSGLRWGMFFIGEYASMIAGAILVTLLFLGGFNGFWIIPGWIMMIVKSSFIFFWYFWARAAFPQLRPDQVMKMCYLILIPLAVVNLLITALAVLL.

Transmembrane regions (helical) follow at residues 4–24 (FAFF…IFAS), 44–64 (IGPD…MIKL), 78–98 (FIFA…LAAI), 120–140 (VALL…FLGG), 165–185 (VGAL…LVDI), 194–214 (FSWL…ALFI), 255–275 (IAGA…FWII), 279–299 (IMMI…RAAF), and 312–332 (YLIL…AVLL).

It belongs to the complex I subunit 1 family. NDH-1 is composed of 14 different subunits. Subunits NuoA, H, J, K, L, M, N constitute the membrane sector of the complex.

It localises to the cell inner membrane. The enzyme catalyses a quinone + NADH + 5 H(+)(in) = a quinol + NAD(+) + 4 H(+)(out). Functionally, NDH-1 shuttles electrons from NADH, via FMN and iron-sulfur (Fe-S) centers, to quinones in the respiratory chain. The immediate electron acceptor for the enzyme in this species is believed to be ubiquinone. Couples the redox reaction to proton translocation (for every two electrons transferred, four hydrogen ions are translocated across the cytoplasmic membrane), and thus conserves the redox energy in a proton gradient. This subunit may bind ubiquinone. The chain is NADH-quinone oxidoreductase subunit H from Campylobacter jejuni subsp. doylei (strain ATCC BAA-1458 / RM4099 / 269.97).